The primary structure comprises 211 residues: Uracil phosphoribosyltransferase (211 aa).

5-phospho-alpha-D-ribose 1-diphosphate-binding positions include R79, R104, and 131–139 (DPMLATGGS). Uracil is bound by residues I196 and 201 to 203 (GDA). D202 contributes to the 5-phospho-alpha-D-ribose 1-diphosphate binding site.

The protein belongs to the UPRTase family. The cofactor is Mg(2+).

The enzyme catalyses UMP + diphosphate = 5-phospho-alpha-D-ribose 1-diphosphate + uracil. It participates in pyrimidine metabolism; UMP biosynthesis via salvage pathway; UMP from uracil: step 1/1. With respect to regulation, allosterically activated by GTP. Catalyzes the conversion of uracil and 5-phospho-alpha-D-ribose 1-diphosphate (PRPP) to UMP and diphosphate. This chain is Uracil phosphoribosyltransferase, found in Limosilactobacillus reuteri (strain DSM 20016) (Lactobacillus reuteri).